We begin with the raw amino-acid sequence, 233 residues long: 2,3,4,5-tetrahydropyridine-2,6-dicarboxylate N-acetyltransferase (233 aa).

The protein belongs to the transferase hexapeptide repeat family. DapH subfamily.

It carries out the reaction (S)-2,3,4,5-tetrahydrodipicolinate + acetyl-CoA + H2O = L-2-acetamido-6-oxoheptanedioate + CoA. It functions in the pathway amino-acid biosynthesis; L-lysine biosynthesis via DAP pathway; LL-2,6-diaminopimelate from (S)-tetrahydrodipicolinate (acetylase route): step 1/3. Catalyzes the transfer of an acetyl group from acetyl-CoA to tetrahydrodipicolinate. The chain is 2,3,4,5-tetrahydropyridine-2,6-dicarboxylate N-acetyltransferase from Leuconostoc mesenteroides subsp. mesenteroides (strain ATCC 8293 / DSM 20343 / BCRC 11652 / CCM 1803 / JCM 6124 / NCDO 523 / NBRC 100496 / NCIMB 8023 / NCTC 12954 / NRRL B-1118 / 37Y).